The sequence spans 198 residues: Regulation of enolase protein 1 (198 aa).

Its subcellular location is the cytoplasm. Functionally, functions in the galactose metabolic pathway via the GAL83 protein and that it may control the level of ENO1. In Saccharomyces cerevisiae (strain ATCC 204508 / S288c) (Baker's yeast), this protein is Regulation of enolase protein 1 (REE1).